The sequence spans 403 residues: Acetylornithine aminotransferase (403 aa).

Residues 107 to 108 and Phe-140 each bind pyridoxal 5'-phosphate; that span reads GA. Residue Arg-143 participates in N(2)-acetyl-L-ornithine binding. Residue 225–228 coordinates pyridoxal 5'-phosphate; that stretch reads DEVQ. N6-(pyridoxal phosphate)lysine is present on Lys-254. Position 282 (Ser-282) interacts with N(2)-acetyl-L-ornithine. Residue Thr-283 participates in pyridoxal 5'-phosphate binding.

Belongs to the class-III pyridoxal-phosphate-dependent aminotransferase family. ArgD subfamily. As to quaternary structure, homodimer. Pyridoxal 5'-phosphate is required as a cofactor.

The protein localises to the cytoplasm. It carries out the reaction N(2)-acetyl-L-ornithine + 2-oxoglutarate = N-acetyl-L-glutamate 5-semialdehyde + L-glutamate. The protein operates within amino-acid biosynthesis; L-arginine biosynthesis; N(2)-acetyl-L-ornithine from L-glutamate: step 4/4. The protein is Acetylornithine aminotransferase of Vibrio parahaemolyticus serotype O3:K6 (strain RIMD 2210633).